We begin with the raw amino-acid sequence, 337 residues long: Dihydroorotate dehydrogenase (quinone) (337 aa).

FMN is bound by residues 58 to 62 and threonine 82; that span reads AGLDK. Position 62 (lysine 62) interacts with substrate. A substrate-binding site is contributed by 107–111; it reads NCMGF. Residues asparagine 137 and asparagine 170 each coordinate FMN. Asparagine 170 serves as a coordination point for substrate. The Nucleophile role is filled by serine 173. Asparagine 175 serves as a coordination point for substrate. 2 residues coordinate FMN: lysine 215 and threonine 243. 244–245 is a substrate binding site; it reads NT. FMN contacts are provided by residues glycine 266, glycine 294, and 315–316; that span reads YS.

It belongs to the dihydroorotate dehydrogenase family. Type 2 subfamily. Monomer. Requires FMN as cofactor.

It localises to the cell membrane. It carries out the reaction (S)-dihydroorotate + a quinone = orotate + a quinol. Its pathway is pyrimidine metabolism; UMP biosynthesis via de novo pathway; orotate from (S)-dihydroorotate (quinone route): step 1/1. Catalyzes the conversion of dihydroorotate to orotate with quinone as electron acceptor. This is Dihydroorotate dehydrogenase (quinone) from Dichelobacter nodosus (strain VCS1703A).